A 500-amino-acid polypeptide reads, in one-letter code: L-arabinose isomerase (500 aa).

Positions 306, 333, 350, and 450 each coordinate Mn(2+).

Belongs to the arabinose isomerase family. In terms of assembly, homohexamer. The cofactor is Mn(2+).

The enzyme catalyses beta-L-arabinopyranose = L-ribulose. The protein operates within carbohydrate degradation; L-arabinose degradation via L-ribulose; D-xylulose 5-phosphate from L-arabinose (bacterial route): step 1/3. Functionally, catalyzes the conversion of L-arabinose to L-ribulose. This is L-arabinose isomerase from Salmonella paratyphi A (strain ATCC 9150 / SARB42).